The following is a 396-amino-acid chain: Unsaturated chondroitin disaccharide hydrolase (396 aa).

Asp-113 functions as the Nucleophile in the catalytic mechanism. Asp-113, Asp-173, Gly-231, Thr-233, Arg-245, Trp-249, Ser-363, and Ser-366 together coordinate substrate. The active-site Proton donor is Asp-173.

It belongs to the glycosyl hydrolase 88 family. Monomer.

It carries out the reaction beta-D-4-deoxy-Delta(4)-GlcpA-(1-&gt;3)-beta-D-GalpNAc6S + H2O = N-acetyl-beta-D-galactosamine 6-sulfate + 5-dehydro-4-deoxy-D-glucuronate. Functionally, catalyzes the hydrolysis of unsaturated hyaluronate and chondroitin disaccharides. Also degrades unsaturated heparin disaccharides. Releases 4-deoxy-4,5-didehydro D-glucuronic acid or 4-deoxy-4,5-didehydro L-iduronic acid from chondroitin disaccharides, hyaluronan disaccharides and heparin disaccharides and cleaves both glycosidic (1-&gt;3) and (1-&gt;4) bonds. Prefers sulfated glycosaminoglycans compared to unsulfated glycosaminoglycans. Probably required for mammalian cells invasion through the degradation of extracellular sulfated glycosaminoglycans such as chondroitin and hyaluronan. The sequence is that of Unsaturated chondroitin disaccharide hydrolase (ugl) from Streptococcus pneumoniae (strain ATCC BAA-255 / R6).